The sequence spans 310 residues: Homoserine O-acetyltransferase (310 aa).

Residue cysteine 142 is the Acyl-thioester intermediate of the active site. Substrate is bound by residues lysine 163 and serine 192. The active-site Proton acceptor is the histidine 235. The active site involves glutamate 237. Arginine 249 is a substrate binding site.

The protein belongs to the MetA family.

The protein resides in the cytoplasm. It catalyses the reaction L-homoserine + acetyl-CoA = O-acetyl-L-homoserine + CoA. It participates in amino-acid biosynthesis; L-methionine biosynthesis via de novo pathway; O-acetyl-L-homoserine from L-homoserine: step 1/1. Its function is as follows. Transfers an acetyl group from acetyl-CoA to L-homoserine, forming acetyl-L-homoserine. The polypeptide is Homoserine O-acetyltransferase (Agathobacter rectalis (strain ATCC 33656 / DSM 3377 / JCM 17463 / KCTC 5835 / VPI 0990) (Eubacterium rectale)).